We begin with the raw amino-acid sequence, 230 residues long: 6-carboxyhexanoate--CoA ligase (230 aa).

It belongs to the BioW family. As to quaternary structure, homodimer. The cofactor is Mg(2+).

It carries out the reaction heptanedioate + ATP + CoA = 6-carboxyhexanoyl-CoA + AMP + diphosphate. It functions in the pathway metabolic intermediate metabolism; pimeloyl-CoA biosynthesis; pimeloyl-CoA from pimelate: step 1/1. In terms of biological role, catalyzes the transformation of pimelate into pimeloyl-CoA with concomitant hydrolysis of ATP to AMP. The chain is 6-carboxyhexanoate--CoA ligase from Staphylococcus aureus (strain MSSA476).